A 252-amino-acid polypeptide reads, in one-letter code: 2-succinyl-6-hydroxy-2,4-cyclohexadiene-1-carboxylate synthase (252 aa).

This sequence belongs to the AB hydrolase superfamily. MenH family. In terms of assembly, monomer.

The catalysed reaction is 5-enolpyruvoyl-6-hydroxy-2-succinyl-cyclohex-3-ene-1-carboxylate = (1R,6R)-6-hydroxy-2-succinyl-cyclohexa-2,4-diene-1-carboxylate + pyruvate. It participates in quinol/quinone metabolism; 1,4-dihydroxy-2-naphthoate biosynthesis; 1,4-dihydroxy-2-naphthoate from chorismate: step 3/7. It functions in the pathway quinol/quinone metabolism; menaquinone biosynthesis. Functionally, catalyzes a proton abstraction reaction that results in 2,5-elimination of pyruvate from 2-succinyl-5-enolpyruvyl-6-hydroxy-3-cyclohexene-1-carboxylate (SEPHCHC) and the formation of 2-succinyl-6-hydroxy-2,4-cyclohexadiene-1-carboxylate (SHCHC). The chain is 2-succinyl-6-hydroxy-2,4-cyclohexadiene-1-carboxylate synthase from Salmonella schwarzengrund (strain CVM19633).